We begin with the raw amino-acid sequence, 1174 residues long: DNA-directed RNA polymerase subunit beta (1174 aa).

It belongs to the RNA polymerase beta chain family. In terms of assembly, the RNAP catalytic core consists of 2 alpha, 1 beta, 1 beta' and 1 omega subunit. When a sigma factor is associated with the core the holoenzyme is formed, which can initiate transcription.

It catalyses the reaction RNA(n) + a ribonucleoside 5'-triphosphate = RNA(n+1) + diphosphate. In terms of biological role, DNA-dependent RNA polymerase catalyzes the transcription of DNA into RNA using the four ribonucleoside triphosphates as substrates. The chain is DNA-directed RNA polymerase subunit beta from Mycolicibacterium gilvum (strain PYR-GCK) (Mycobacterium gilvum (strain PYR-GCK)).